The sequence spans 906 residues: Protein translocase subunit SecA (906 aa).

Residues glutamine 86, 104 to 108, and aspartate 499 each bind ATP; that span reads GEGKT. The tract at residues 862-886 is disordered; it reads KPVVSRIDPKDRNPDDPTSWGRVSR. Cysteine 890, cysteine 892, cysteine 901, and histidine 902 together coordinate Zn(2+).

It belongs to the SecA family. As to quaternary structure, monomer and homodimer. Part of the essential Sec protein translocation apparatus which comprises SecA, SecYEG and auxiliary proteins SecDF-YajC and YidC. Zn(2+) serves as cofactor.

The protein localises to the cell inner membrane. It is found in the cytoplasm. The catalysed reaction is ATP + H2O + cellular proteinSide 1 = ADP + phosphate + cellular proteinSide 2.. In terms of biological role, part of the Sec protein translocase complex. Interacts with the SecYEG preprotein conducting channel. Has a central role in coupling the hydrolysis of ATP to the transfer of proteins into and across the cell membrane, serving both as a receptor for the preprotein-SecB complex and as an ATP-driven molecular motor driving the stepwise translocation of polypeptide chains across the membrane. The polypeptide is Protein translocase subunit SecA (Rickettsia africae (strain ESF-5)).